The primary structure comprises 355 residues: Tryptophan--tRNA ligase (355 aa).

ATP contacts are provided by residues Q13–T15 and G21–N22. Residues P14–N22 carry the 'HIGH' region motif. D137 contributes to the L-tryptophan binding site. ATP-binding positions include G149–D151, I208, and K217–S221. The 'KMSKS' region signature appears at K217–S221.

It belongs to the class-I aminoacyl-tRNA synthetase family. Homodimer.

It is found in the cytoplasm. The enzyme catalyses tRNA(Trp) + L-tryptophan + ATP = L-tryptophyl-tRNA(Trp) + AMP + diphosphate + H(+). Catalyzes the attachment of tryptophan to tRNA(Trp). This is Tryptophan--tRNA ligase from Brucella melitensis biotype 1 (strain ATCC 23456 / CCUG 17765 / NCTC 10094 / 16M).